Reading from the N-terminus, the 206-residue chain is Large ribosomal subunit protein uL4 (206 aa).

The segment at 46–77 (GTRAQKDREQVKHSTKKPFKQKGTGNARAGMT) is disordered.

This sequence belongs to the universal ribosomal protein uL4 family. Part of the 50S ribosomal subunit.

Functionally, one of the primary rRNA binding proteins, this protein initially binds near the 5'-end of the 23S rRNA. It is important during the early stages of 50S assembly. It makes multiple contacts with different domains of the 23S rRNA in the assembled 50S subunit and ribosome. Its function is as follows. Forms part of the polypeptide exit tunnel. The protein is Large ribosomal subunit protein uL4 of Acidovorax ebreus (strain TPSY) (Diaphorobacter sp. (strain TPSY)).